The sequence spans 1020 residues: Nucleotide-binding oligomerization domain-containing protein 2 (1020 aa).

CARD domains lie at 6–104 (CDMC…GSWD) and 106–200 (HSLH…AECQ). The ATG16L1-binding motif signature appears at 43–57 (WDVLSREDYEGLSLP). Residues T219, Y232, T233, G282, S283, G284, K285, S286, and T287 each contribute to the ADP site. Residues 221–254 (DGSENLCLEDIYTENILELQTEVGTAGALQKSPA) form a required for CARD9 binding region. Residues 273–600 (DTILVVGEAG…AAFYLAVSAD (328 aa)) enclose the NACHT domain. C375 carries the S-palmitoyl cysteine lipid modification. H583 is a binding site for ADP. LRR repeat units follow at residues 685-709 (ARAR…VPGE), 726-749 (LYEM…HLKL), 766-792 (LQHL…QLRP), 794-817 (LGVC…TLVE), 822-845 (CEQL…SMAK), 850-873 (KQNF…VLAQ), 906-929 (HQNL…ALAL), 934-962 (NKSL…LKRN), 963-985 (STLK…ALLQ), and 1005-1019 (LEEI…ARLL).

Belongs to the NOD1-NOD2 family. Homooligomer: homooligomerizes following muramyl dipeptide (MDP)-binding, promoting RIPK2 recruitment. Interacts (via CARD domain) with RIPK2 (via CARD domain). Following RIPK2 recruitment, RIPK2 homooligomerizes via its CARD domain and forms long filaments named RIPosomes. Interacts (via CARD domain) with ubiquitin; inhibiting interaction with RIPK2. Component of a signaling complex consisting of ARHGEF2, NOD2 and RIPK2. Interacts with ANKRD17 (via N-terminus). Interacts with HSPA1A; the interaction enhances NOD2 stability. Interacts (via both CARD domains) with HSP90; the interaction enhances NOD2 stability. Interacts (via CARD domain) with SOCS3; the interaction promotes NOD2 degradation. Interacts (via CARD domain) with ERBIN; the interaction inhibits activation of NOD2. Interacts with MAPKBP1; the interaction is enhanced in the presence of muramyl dipeptide (MDP) and inhibits NOD2 homooligomerization and activation. Interacts with INAVA; the interaction takes place upon Pattern recognition receptor (PRR) stimulation. Interacts (via NACHT domain) with CARD9. Interacts (via CARD domain) with CASP1; this interaction leads to IL1B processing. Also interacts with CASP4. Interacts with NLRP1; this interaction is enhanced in the presence of muramyl dipeptide (MDP) and leads to increased IL1B release. Interacts with NLRP12; this interaction promotes degradation of NOD2 through the ubiquitin-proteasome pathway. Interacts with ANKHD1, C10orf67, CHMP5, DOCK7, ENTR1, KRT15, LDOC1, PPP1R12C, PPP2R3B, TRIM41 and VIM. Interacts with MAVS; interaction takes place following single-stranded RNA (ssRNA)-binding. Interacts with ATG16L1. Interacts with Irgm1; promoting Irgm1 'Lys-63'-linked polyubiquitination, which is required for interactions with the core autophagy factors. Palmitoylated by ZDHHC5; palmitoylation is required for proper recruitment to the bacterial entry site and hence for proper signaling upon cognate peptidoglycan detection. Palmitoylation promotes localization to the cell membrane. Palmitoylation protects from SQSTM1/p62-dependent autophagic degradation. Post-translationally, polyubiquitinated by TRIM27, leading to proteasome-mediated degradation. Polyubiquitinated and degraded following muramyl dipeptide (MDP) stimulation, conferring MDP tolerance and preventing septic shock. In terms of processing, degraded via selective autophagy following interaction with Irgm1. Irgm1 promotes NOD2-RIPK2 RIPosome recruitment to autophagosome membranes, promoting their SQSTM1/p62-dependent autophagic degradation. O-glycosylated by OGT, O-GlcNAcylation increases protein stability. As to expression, expressed in monocytes, macrophages, dendritic cells, hepatocytes, preadipocytes, epithelial cells of oral cavity, lung and intestine. In intestine, highly expressed in ileal Paneth cells of the crypt and in intestinal stem cells. Also expressed in neurons of several brain regions including the hypothalamus.

The protein localises to the cell membrane. Its subcellular location is the basolateral cell membrane. The protein resides in the cytoplasm. It is found in the mitochondrion. ADP-binding promotes an inactive closed conformation. In terms of biological role, pattern recognition receptor (PRR) that detects bacterial peptidoglycan fragments and other danger signals and plays an important role in gastrointestinal immunity. Specifically activated by muramyl dipeptide (MDP), a fragment of bacterial peptidoglycan found in every bacterial peptidoglycan type. NOD2 specifically recognizes and binds 6-O-phospho-MDP, the phosphorylated form of MDP, which is generated by NAGK. 6-O-phospho-MDP-binding triggers oligomerization that facilitates the binding and subsequent activation of the proximal adapter receptor-interacting RIPK2. Following recruitment, RIPK2 undergoes 'Met-1'- (linear) and 'Lys-63'-linked polyubiquitination by E3 ubiquitin-protein ligases XIAP, BIRC2, BIRC3 and the LUBAC complex, becoming a scaffolding protein for downstream effectors, triggering activation of the NF-kappa-B and MAP kinases signaling. This in turn leads to the transcriptional activation of hundreds of genes involved in immune response. Its ability to detect bacterial MDP plays a central role in maintaining the equilibrium between intestinal microbiota and host immune responses to control inflammation. An imbalance in this relationship results in dysbiosis, whereby pathogenic bacteria prevail on commensals, causing damage in the intestinal epithelial barrier as well as allowing bacterial invasion and inflammation. Acts as a regulator of appetite by sensing MDP in a subset of brain neurons: microbiota-derived MDP reach the brain, where they bind and activate NOD2 in inhibitory hypothalamic neurons, decreasing neuronal activity, thereby regulating satiety and body temperature. NOD2-dependent MDP-sensing of bacterial cell walls in the intestinal epithelial compartment contributes to sustained postnatal growth upon undernutrition. Also plays a role in antiviral response by acting as a sensor of single-stranded RNA (ssRNA) from viruses: upon ssRNA-binding, interacts with MAVS, leading to activation of interferon regulatory factor-3/IRF3 and expression of type I interferon. Also acts as a regulator of autophagy in dendritic cells via its interaction with ATG16L1, possibly by recruiting ATG16L1 at the site of bacterial entry. NOD2 activation in the small intestine crypt also contributes to intestinal stem cells survival and function: acts by promoting mitophagy via its association with ATG16L1. In addition to its main role in innate immunity, also regulates the adaptive immune system by acting as regulator of helper T-cell and regulatory T-cells (Tregs). Besides recognizing pathogens, also involved in the endoplasmic reticulum stress response: acts by sensing and binding to the cytosolic metabolite sphingosine-1-phosphate generated in response to endoplasmic reticulum stress, initiating an inflammation process that leads to activation of the NF-kappa-B and MAP kinases signaling. May also be involved in NLRP1 activation following activation by MDP, leading to CASP1 activation and IL1B release in macrophages. The protein is Nucleotide-binding oligomerization domain-containing protein 2 of Mus musculus (Mouse).